The sequence spans 156 residues: ATP synthase subunit b (156 aa).

Residues 3–23 traverse the membrane as a helical segment; that stretch reads INFTLLAQALAFAGLIWIIAT.

It belongs to the ATPase B chain family. In terms of assembly, F-type ATPases have 2 components, F(1) - the catalytic core - and F(0) - the membrane proton channel. F(1) has five subunits: alpha(3), beta(3), gamma(1), delta(1), epsilon(1). F(0) has three main subunits: a(1), b(2) and c(10-14). The alpha and beta chains form an alternating ring which encloses part of the gamma chain. F(1) is attached to F(0) by a central stalk formed by the gamma and epsilon chains, while a peripheral stalk is formed by the delta and b chains.

Its subcellular location is the cell inner membrane. Functionally, f(1)F(0) ATP synthase produces ATP from ADP in the presence of a proton or sodium gradient. F-type ATPases consist of two structural domains, F(1) containing the extramembraneous catalytic core and F(0) containing the membrane proton channel, linked together by a central stalk and a peripheral stalk. During catalysis, ATP synthesis in the catalytic domain of F(1) is coupled via a rotary mechanism of the central stalk subunits to proton translocation. Its function is as follows. Component of the F(0) channel, it forms part of the peripheral stalk, linking F(1) to F(0). In Stenotrophomonas maltophilia (strain R551-3), this protein is ATP synthase subunit b.